The chain runs to 223 residues: ATP-dependent dethiobiotin synthetase BioD (223 aa).

Threonine 16 serves as a coordination point for Mg(2+). Lysine 37 is a catalytic residue. Position 41 (serine 41) interacts with substrate. Positions 50 and 111 each coordinate Mg(2+). Residues aspartate 50, 111–114 (EGAG), 171–172 (NQ), 201–203 (AHV), and glutamate 208 contribute to the ATP site.

Belongs to the dethiobiotin synthetase family. In terms of assembly, homodimer. Mg(2+) serves as cofactor.

It localises to the cytoplasm. The enzyme catalyses (7R,8S)-7,8-diammoniononanoate + CO2 + ATP = (4R,5S)-dethiobiotin + ADP + phosphate + 3 H(+). The protein operates within cofactor biosynthesis; biotin biosynthesis; biotin from 7,8-diaminononanoate: step 1/2. Functionally, catalyzes a mechanistically unusual reaction, the ATP-dependent insertion of CO2 between the N7 and N8 nitrogen atoms of 7,8-diaminopelargonic acid (DAPA, also called 7,8-diammoniononanoate) to form a ureido ring. This Anaeromyxobacter sp. (strain Fw109-5) protein is ATP-dependent dethiobiotin synthetase BioD.